The chain runs to 218 residues: Small ribosomal subunit protein uS3c (218 aa).

Positions 43-118 (IKNYVQKNTK…KFNIAITKIA (76 aa)) constitute a KH type-2 domain.

This sequence belongs to the universal ribosomal protein uS3 family. Part of the 30S ribosomal subunit.

The protein localises to the plastid. Its subcellular location is the chloroplast. The polypeptide is Small ribosomal subunit protein uS3c (rps3) (Coffea arabica (Arabian coffee)).